A 392-amino-acid polypeptide reads, in one-letter code: S-adenosylmethionine synthase (392 aa).

Position 10 (Glu-10) interacts with Mg(2+). His-16 is an ATP binding site. Residue Glu-44 participates in K(+) binding. The L-methionine site is built by Glu-57 and Gln-100. ATP is bound by residues 168 to 170 (DGK), 236 to 239 (SGRF), Asp-247, 253 to 254 (RK), Ala-270, Lys-274, and Lys-278. Asp-247 provides a ligand contact to L-methionine. Lys-278 lines the L-methionine pocket.

It belongs to the AdoMet synthase family. In terms of assembly, homotetramer. Requires Mn(2+) as cofactor. The cofactor is Mg(2+). Co(2+) serves as cofactor. K(+) is required as a cofactor.

It is found in the cytoplasm. It carries out the reaction L-methionine + ATP + H2O = S-adenosyl-L-methionine + phosphate + diphosphate. It functions in the pathway amino-acid biosynthesis; S-adenosyl-L-methionine biosynthesis; S-adenosyl-L-methionine from L-methionine: step 1/1. Functionally, catalyzes the formation of S-adenosylmethionine from methionine and ATP. The reaction comprises two steps that are both catalyzed by the same enzyme: formation of S-adenosylmethionine (AdoMet) and triphosphate, and subsequent hydrolysis of the triphosphate. This is S-adenosylmethionine synthase (SAMS) from Phaseolus lunatus (Lima bean).